The chain runs to 888 residues: MMEQYLEIKAANPGLLLFYRMGDFYELFFEDAEIASRALGITLTKRGKHQGADIPMCGVPVERSDDYLHRLIAAGHRVAVCEQTEDPSAARKRGNKSVVRRDVVRLVTPGTLTEDTLLDARANNYLLALARARASSGVDRFALAWIDISTAEFMVTECGANELAATLARINPNEVIVSDTLHGDPDLGALLRELPSVTPLPRDTFDGATAERRLCDYFAVATMDGLSAMSRLEATAAAAAVTYIDRTQIGQRPPLSPPSREASGSTMAIDPATRANLELTRTLAGERRGSLLDAIDRTMTAAGSRLLAQRLAAPLTDTAAITRRLDAVAALTADGAARDDIRAILRTAPDMSRALARLSLGRGGPRDLAGLRDGVMAADQTLARLAGLSDPPEGIAAAMQALRGPSRELARELGNALSENLPLMKRDGGFVREGYDTALDEARKLRDDSRLVVAAMQARYAEETGVKTLKIRHNNVLGYFVEVTAQHANRLMSAPLNATFIHRQTLAGQVRFTTSELGEIEARIANAGERALGLELDIFDRLAAMAIRNGDEIRNAAHAFAQLDVAASFAKLAIDENYTRPDIDASLSFAIEGGRHPVVEQALKRTGQPFIANACDLSPPPPPVEGSGESGQIWLLTGPNMAGKSTFLRQNALIALMAQVGSFVPASRARIGIIDRLFSRVGAADDLARGRSTFMVEMVETAVILNQASERALVILDEIGRGTATFDGLSIAWATIEHLHESNRCRALFATHYHELTALSAKLPRLFNATVRVKEWHGEVVFLHEVLPGAADRSYGIQVARLAGLPPSVIARAKSVLAKLEAQDRGSTVRVLVDDLPLFAVTSRTGESAPTGETSPLIEALKSLHPDEMSPREALDALYALKAKLPKQ.

A disordered region spans residues 249 to 271; the sequence is IGQRPPLSPPSREASGSTMAIDP. Residue 638 to 645 coordinates ATP; sequence GPNMAGKS.

Belongs to the DNA mismatch repair MutS family.

Its function is as follows. This protein is involved in the repair of mismatches in DNA. It is possible that it carries out the mismatch recognition step. This protein has a weak ATPase activity. The sequence is that of DNA mismatch repair protein MutS from Nitrobacter winogradskyi (strain ATCC 25391 / DSM 10237 / CIP 104748 / NCIMB 11846 / Nb-255).